The primary structure comprises 478 residues: Lysosome membrane protein 2 (478 aa).

Over 2–4 the chain is Cytoplasmic; it reads ARC. Residues 5-27 traverse the membrane as a helical segment; it reads CFYTAGTLSLLLLVTSVTLLVAR. The Lumenal portion of the chain corresponds to 28–433; it reads VFQKAVDQTI…QLKSVINTTL (406 aa). N-linked (GlcNAc...) asparagine glycans are attached at residues Asn-45, Asn-68, Asn-105, and Asn-122. The interval 155 to 191 is important for interaction with GBA1; sequence IIEAMLKAYQQTLFVTHTVHELLWGYKDEVLSLVHIF. N-linked (GlcNAc...) asparagine glycans are attached at residues Asn-206, Asn-224, Asn-249, and Asn-304. 2 disulfide bridges follow: Cys-274–Cys-329 and Cys-312–Cys-318. Asn-325, Asn-412, and Asn-430 each carry an N-linked (GlcNAc...) asparagine glycan. The helical transmembrane segment at 434-459 threads the bilayer; sequence IVTNIPYIIMALGVFFGLIFTWLACR. The Cytoplasmic portion of the chain corresponds to 460 to 478; it reads GQGSTDEGTADERAPLIRT.

Belongs to the CD36 family. Interacts with GBA1. Acylated by palmitic acid group(s).

The protein resides in the lysosome membrane. Acts as a lysosomal receptor for glucosylceramidase (GBA1) targeting. In Rattus norvegicus (Rat), this protein is Lysosome membrane protein 2 (Scarb2).